The following is a 391-amino-acid chain: 1-deoxy-D-xylulose 5-phosphate reductoisomerase (391 aa).

NADPH contacts are provided by T17, G18, S19, I20, N47, and N130. K131 provides a ligand contact to 1-deoxy-D-xylulose 5-phosphate. E132 lines the NADPH pocket. D156 serves as a coordination point for Mn(2+). 1-deoxy-D-xylulose 5-phosphate-binding residues include S157, E158, S182, and H205. Residue E158 coordinates Mn(2+). Residue G211 participates in NADPH binding. The 1-deoxy-D-xylulose 5-phosphate site is built by S218, N223, K224, and E227. E227 is a binding site for Mn(2+).

It belongs to the DXR family. Mg(2+) serves as cofactor. The cofactor is Mn(2+).

The enzyme catalyses 2-C-methyl-D-erythritol 4-phosphate + NADP(+) = 1-deoxy-D-xylulose 5-phosphate + NADPH + H(+). It functions in the pathway isoprenoid biosynthesis; isopentenyl diphosphate biosynthesis via DXP pathway; isopentenyl diphosphate from 1-deoxy-D-xylulose 5-phosphate: step 1/6. Its function is as follows. Catalyzes the NADPH-dependent rearrangement and reduction of 1-deoxy-D-xylulose-5-phosphate (DXP) to 2-C-methyl-D-erythritol 4-phosphate (MEP). In Rhizobium meliloti (strain 1021) (Ensifer meliloti), this protein is 1-deoxy-D-xylulose 5-phosphate reductoisomerase.